The primary structure comprises 491 residues: Acetyl-coenzyme A carboxylase carboxyl transferase subunit beta (491 aa).

The CoA carboxyltransferase N-terminal domain maps to 132–491 (LWNQCENCFI…ISELLNLHAL (360 aa)). The Zn(2+) site is built by Cys136, Cys139, Cys155, and Cys158. The C4-type zinc finger occupies 136–158 (CENCFIPNYKKVLKSNMQICEEC). Positions 252-262 (EKVEEWTKPDL) are enriched in basic and acidic residues. Disordered stretches follow at residues 252–273 (EKVEEWTKPDLDEGEESQDEER) and 279–298 (DKGEESQEIEDSEANDEDDD). A compositionally biased stretch (acidic residues) spans 284 to 298 (SQEIEDSEANDEDDD).

This sequence belongs to the AccD/PCCB family. Acetyl-CoA carboxylase is a heterohexamer composed of biotin carboxyl carrier protein, biotin carboxylase and 2 subunits each of ACCase subunit alpha and ACCase plastid-coded subunit beta (accD). Zn(2+) is required as a cofactor.

Its subcellular location is the plastid. It carries out the reaction N(6)-carboxybiotinyl-L-lysyl-[protein] + acetyl-CoA = N(6)-biotinyl-L-lysyl-[protein] + malonyl-CoA. It functions in the pathway lipid metabolism; malonyl-CoA biosynthesis; malonyl-CoA from acetyl-CoA: step 1/1. In terms of biological role, component of the acetyl coenzyme A carboxylase (ACC) complex. Biotin carboxylase (BC) catalyzes the carboxylation of biotin on its carrier protein (BCCP) and then the CO(2) group is transferred by the transcarboxylase to acetyl-CoA to form malonyl-CoA. This chain is Acetyl-coenzyme A carboxylase carboxyl transferase subunit beta, found in Cuscuta gronovii (Common dodder).